The sequence spans 88 residues: MIKNTFISFEEQKEESRGSVEFQVFSFTNKIRRLTSHLELHRKDFLSQRGLRKILGKRQRLLAYLSKKNRVRYKELINQLNIRELKTR.

The protein belongs to the universal ribosomal protein uS15 family. In terms of assembly, part of the 30S ribosomal subunit.

It is found in the plastid. The protein resides in the chloroplast. The chain is Small ribosomal subunit protein uS15c (rps15) from Capsella bursa-pastoris (Shepherd's purse).